Consider the following 120-residue polypeptide: Methylglyoxal synthase (120 aa).

The MGS-like domain maps to 1 to 120; sequence MRIALIAHDN…TAEILVESVL (120 aa). Substrate is bound by residues His8, Lys12, and 54–55; that span reads SG. The Proton donor/acceptor role is filled by Asp60. Substrate is bound at residue His87.

The protein belongs to the methylglyoxal synthase family.

The catalysed reaction is dihydroxyacetone phosphate = methylglyoxal + phosphate. Functionally, catalyzes the formation of methylglyoxal from dihydroxyacetone phosphate. The sequence is that of Methylglyoxal synthase from Natranaerobius thermophilus (strain ATCC BAA-1301 / DSM 18059 / JW/NM-WN-LF).